A 101-amino-acid polypeptide reads, in one-letter code: Small ribosomal subunit protein uS14 (101 aa).

The protein belongs to the universal ribosomal protein uS14 family. As to quaternary structure, part of the 30S ribosomal subunit. Contacts proteins S3 and S10.

In terms of biological role, binds 16S rRNA, required for the assembly of 30S particles and may also be responsible for determining the conformation of the 16S rRNA at the A site. The chain is Small ribosomal subunit protein uS14 from Pseudomonas syringae pv. tomato (strain ATCC BAA-871 / DC3000).